A 116-amino-acid polypeptide reads, in one-letter code: S-adenosylmethionine decarboxylase proenzyme (116 aa).

Ser63 acts as the Schiff-base intermediate with substrate; via pyruvic acid in catalysis. The residue at position 63 (Ser63) is a Pyruvic acid (Ser); by autocatalysis. Residue His68 is the Proton acceptor; for processing activity of the active site. Cys83 (proton donor; for catalytic activity) is an active-site residue.

It belongs to the prokaryotic AdoMetDC family. Type 1 subfamily. As to quaternary structure, heterotetramer of two alpha and two beta chains arranged as a dimer of alpha/beta heterodimers. Requires pyruvate as cofactor. In terms of processing, is synthesized initially as an inactive proenzyme. Formation of the active enzyme involves a self-maturation process in which the active site pyruvoyl group is generated from an internal serine residue via an autocatalytic post-translational modification. Two non-identical subunits are generated from the proenzyme in this reaction, and the pyruvate is formed at the N-terminus of the alpha chain, which is derived from the carboxyl end of the proenzyme. The post-translation cleavage follows an unusual pathway, termed non-hydrolytic serinolysis, in which the side chain hydroxyl group of the serine supplies its oxygen atom to form the C-terminus of the beta chain, while the remainder of the serine residue undergoes an oxidative deamination to produce ammonia and the pyruvoyl group blocking the N-terminus of the alpha chain.

The enzyme catalyses S-adenosyl-L-methionine + H(+) = S-adenosyl 3-(methylsulfanyl)propylamine + CO2. Its pathway is amine and polyamine biosynthesis; S-adenosylmethioninamine biosynthesis; S-adenosylmethioninamine from S-adenosyl-L-methionine: step 1/1. Catalyzes the decarboxylation of S-adenosylmethionine to S-adenosylmethioninamine (dcAdoMet), the propylamine donor required for the synthesis of the polyamines spermine and spermidine from the diamine putrescine. The protein is S-adenosylmethionine decarboxylase proenzyme of Clostridium botulinum (strain 657 / Type Ba4).